The primary structure comprises 367 residues: Riboflavin biosynthesis protein VVA0006 (367 aa).

215 to 219 is a GTP binding site; that stretch reads RLHSE. The Zn(2+) site is built by cysteine 220, cysteine 231, and cysteine 233. GTP-binding positions include glutamine 236, 258-260, and threonine 280; that span reads EGR. Residue aspartate 292 is the Proton acceptor of the active site. Arginine 294 (nucleophile) is an active-site residue. The GTP site is built by threonine 315 and lysine 320.

In the N-terminal section; belongs to the YbiA family. The protein in the C-terminal section; belongs to the GTP cyclohydrolase II family. The cofactor is Zn(2+).

It carries out the reaction 2,5-diamino-6-hydroxy-4-(5-phosphoribosylamino)-pyrimidine + H2O = 2,5,6-triamino-4-hydroxypyrimidine + D-ribose 5-phosphate. It catalyses the reaction 5-amino-6-(5-phospho-D-ribosylamino)uracil + H2O = 5,6-diaminouracil + D-ribose 5-phosphate. The catalysed reaction is GTP + 4 H2O = 2,5-diamino-6-hydroxy-4-(5-phosphoribosylamino)-pyrimidine + formate + 2 phosphate + 3 H(+). It participates in cofactor biosynthesis; riboflavin biosynthesis; 5-amino-6-(D-ribitylamino)uracil from GTP: step 1/4. Functionally, catalyzes the hydrolysis of the N-glycosidic bond in the first two intermediates of riboflavin biosynthesis, which are highly reactive metabolites, yielding relatively innocuous products. Thus, can divert a surplus of harmful intermediates into relatively harmless products and pre-empt the damage these intermediates would otherwise do. Has no activity against GTP, nucleoside monophosphates or ADP-ribose. In terms of biological role, catalyzes the conversion of GTP to 2,5-diamino-6-ribosylamino-4(3H)-pyrimidinone 5'-phosphate (DARP), formate and pyrophosphate. In Vibrio vulnificus (strain YJ016), this protein is Riboflavin biosynthesis protein VVA0006.